The chain runs to 342 residues: Putative anthocyanidin reductase (342 aa).

NADP(+) is bound by residues Arg44, Lys51, 71–72 (EL), 91–93 (VAT), Tyr172, Lys176, 199–202 (PVLV), and Ser214. The Proton donor role is filled by Lys176.

The protein belongs to the NAD(P)-dependent epimerase/dehydratase family. Dihydroflavonol-4-reductase subfamily. Highly expressed in leaves and weakly in stems. Not expressed in roots.

Its pathway is secondary metabolite biosynthesis; flavonoid biosynthesis. The chain is Putative anthocyanidin reductase from Ginkgo biloba (Ginkgo).